Reading from the N-terminus, the 332-residue chain is 4-hydroxythreonine-4-phosphate dehydrogenase (332 aa).

Residues histidine 138 and threonine 139 each contribute to the substrate site. A divalent metal cation is bound by residues histidine 168, histidine 213, and histidine 269. 3 residues coordinate substrate: lysine 277, asparagine 286, and arginine 295.

Belongs to the PdxA family. As to quaternary structure, homodimer. Requires Zn(2+) as cofactor. The cofactor is Mg(2+). Co(2+) is required as a cofactor.

The protein resides in the cytoplasm. The enzyme catalyses 4-(phosphooxy)-L-threonine + NAD(+) = 3-amino-2-oxopropyl phosphate + CO2 + NADH. It participates in cofactor biosynthesis; pyridoxine 5'-phosphate biosynthesis; pyridoxine 5'-phosphate from D-erythrose 4-phosphate: step 4/5. In terms of biological role, catalyzes the NAD(P)-dependent oxidation of 4-(phosphooxy)-L-threonine (HTP) into 2-amino-3-oxo-4-(phosphooxy)butyric acid which spontaneously decarboxylates to form 3-amino-2-oxopropyl phosphate (AHAP). The chain is 4-hydroxythreonine-4-phosphate dehydrogenase from Vibrio parahaemolyticus serotype O3:K6 (strain RIMD 2210633).